The primary structure comprises 145 residues: Large ribosomal subunit protein uL13 (145 aa).

This sequence belongs to the universal ribosomal protein uL13 family. Part of the 50S ribosomal subunit.

Functionally, this protein is one of the early assembly proteins of the 50S ribosomal subunit, although it is not seen to bind rRNA by itself. It is important during the early stages of 50S assembly. The polypeptide is Large ribosomal subunit protein uL13 (Staphylococcus aureus (strain Mu3 / ATCC 700698)).